Consider the following 3387-residue polypeptide: Genome polyprotein (3387 aa).

At 1–100 (MNQRKKVVRP…LNILNGRKRS (100 aa)) the chain is on the cytoplasmic side. Positions 36 to 71 (LFSGKGPLRMVLAFITFLRVLSIPPTAGILKRWGQL) are hydrophobic; homodimerization of capsid protein C. Positions 100–113 (STMTLLCLIPTAMA) are cleaved as a propeptide — ER anchor for the capsid protein C, removed in mature form by serine protease NS3. A helical membrane pass occupies residues 101-117 (TMTLLCLIPTAMAFHLS). The Extracellular segment spans residues 118–237 (TRDGEPLMIV…GAWKHAQRVE (120 aa)). N-linked (GlcNAc...) asparagine; by host glycosylation is present at Asn182. The chain crosses the membrane as a helical span at residues 238 to 258 (SWILRNPGFALLAGFMAYMIG). Topologically, residues 259 to 265 (QTGIQRT) are cytoplasmic. The helical transmembrane segment at 266–279 (VFFVLMMLVAPSYG) threads the bilayer. Over 280-723 (MRCVGVGNRD…AVHQVFGSVY (444 aa)) the chain is Extracellular. Disulfide bonds link Cys282-Cys309, Cys339-Cys400, Cys353-Cys384, Cys371-Cys395, Cys464-Cys564, and Cys581-Cys612. The N-linked (GlcNAc...) asparagine; by host glycan is linked to Asn346. Residues 377–390 (DRGWGNGCGLFGKG) are fusion peptide. The chain crosses the membrane as a helical span at residues 724–746 (TTMFGGVSWMVRILIGFLVLWIG). The Cytoplasmic portion of the chain corresponds to 747–750 (TNSR). Residues 751–771 (NTSMAMTCIAVGGITLFLGFT) traverse the membrane as a helical segment. Residues 772-1194 (VHADTGCAVS…MLGDTMSGRM (423 aa)) are Extracellular-facing. 6 disulfide bridges follow: Cys778–Cys789, Cys829–Cys917, Cys953–Cys997, Cys1054–Cys1103, Cys1065–Cys1087, and Cys1086–Cys1090. N-linked (GlcNAc...) asparagine; by host glycans are attached at residues Asn904 and Asn981. Residues 1195 to 1218 (GGQIHLAIMAVFKMSPGYVLGIFL) form a helical membrane-spanning segment. Over 1219-1224 (RKLTSR) the chain is Lumenal. Residues 1225–1243 (ETALMVIGMAMTTVLSIPH) traverse the membrane as a helical segment. Topologically, residues 1244-1267 (DLMEFIDGISLGLILLKMVTHFDN) are cytoplasmic. Residues 1268-1288 (TQVGTLALSLTFIRSTMPLVM) form a helical membrane-spanning segment. Position 1289 (Ala1289) is a topological domain, lumenal. The chain crosses the membrane as a helical span at residues 1290-1308 (WRTIMAVLFVVTLIPLCRT). Topologically, residues 1309 to 1316 (SCLQKQSH) are lumenal. The helical transmembrane segment at 1317–1337 (WVEITALILGAQALPVYLMTL) threads the bilayer. Topologically, residues 1338 to 1345 (MKGASKRS) are cytoplasmic. Residues 1346–1366 (WPLNEGIMAVGLVSLLGSALL) traverse the membrane as a helical segment. The Lumenal portion of the chain corresponds to 1367–1369 (KND). Residues 1370–1390 (VPLAGPMVAGGLLLAAYVMSG) form a helical membrane-spanning segment. Residues 1391–1437 (SSADLSLEKAANVQWDEMADITGSSPIIEVKQDEDGSFSIRDIEETN) lie on the Cytoplasmic side of the membrane. The segment at 1397–1436 (LEKAANVQWDEMADITGSSPIIEVKQDEDGSFSIRDIEET) is interacts with and activates NS3 protease. The helical intramembrane region spans 1438–1458 (MITLLVKLALITVSGLYPLAI). The Cytoplasmic segment spans residues 1459-2146 (PVTMTLWYMW…LNELPESLET (688 aa)). A Peptidase S7 domain is found at 1475-1652 (SGALWDVPSP…ERTGEPDYEV (178 aa)). Active-site charge relay system; for serine protease NS3 activity residues include His1525, Asp1549, and Ser1609. Residues 1654 to 1810 (EDIFRKKRLT…QSNSPIEDIE (157 aa)) enclose the Helicase ATP-binding domain. The important for RNA-binding stretch occupies residues 1658–1661 (RKKR). An ATP-binding site is contributed by 1667–1674 (LHPGAGKT). The DEAH box motif lies at 1758-1761 (DEAH). Residues 1820 to 1987 (TGFDWITDYQ…IIPTLFGPER (168 aa)) enclose the Helicase C-terminal domain. Lys1862 bears the N6-acetyllysine; by host mark. Residues 2147–2167 (LMLVALLGAMTAGIFLFFMQG) form a helical membrane-spanning segment. At 2168–2169 (KG) the chain is on the lumenal side. The segment at residues 2170–2190 (IGKLSMGLIAIAVASGLLWVA) is an intramembrane region (helical). A topological domain (lumenal) is located at residue Glu2191. A helical transmembrane segment spans residues 2192–2212 (IQPQWIAASIILEFFLMVLLI). The Cytoplasmic portion of the chain corresponds to 2213–2225 (PEPEKQRTPQDNQ). The chain crosses the membrane as a helical span at residues 2226 to 2246 (LIYVILTILTIIGLIAANEMG). The Lumenal portion of the chain corresponds to 2247 to 2270 (LIEKTKTDFGFYQVKTETTILDVD). Residues 2271 to 2291 (LRPASAWTLYAVATTILTPML) constitute an intramembrane region (helical). Residues 2292–2301 (RHTIENTSAN) lie on the Lumenal side of the membrane. Residues Asn2297 and Asn2301 are each glycosylated (N-linked (GlcNAc...) asparagine; by host). The helical intramembrane region spans 2302 to 2322 (LSLAAIANQAAVLMGLGKGWP). Residues 2323–2343 (LHRMDLGVPLLAMGCYSQVNP) are Lumenal-facing. The helical transmembrane segment at 2344-2364 (TTLIASLVMLLVHYAIIGPGL) threads the bilayer. Topologically, residues 2365–2409 (QAKATREAQKRTAAGIMKNPTVDGITVIDLEPISYDPKFEKQLGQ) are cytoplasmic. The chain crosses the membrane as a helical span at residues 2410-2430 (VMLLVLCAGQLLLMRTTWAFC). Residues 2431–2455 (EVLTLATGPVLTLWEGNPGRFWNTT) are Lumenal-facing. Residue Asn2453 is glycosylated (N-linked (GlcNAc...) asparagine; by host). Residues 2456–2476 (IAVSTANIFRGSYLAGAGLAF) traverse the membrane as a helical segment. Over 2477–3387 (SLIKNAQTPR…SAPFESEGVL (911 aa)) the chain is Cytoplasmic. The 263-residue stretch at 2489–2751 (TGTTGETLGE…DVDLGAGTRS (263 aa)) folds into the mRNA cap 0-1 NS5-type MT domain. Ser2543 serves as a coordination point for S-adenosyl-L-methionine. Ser2543 is subject to Phosphoserine. Lys2548 functions as the For 2'-O-MTase activity in the catalytic mechanism. The SUMO-interacting motif signature appears at 2564–2567 (VVDL). The S-adenosyl-L-methionine site is built by Gly2573, Trp2574, Thr2591, Lys2592, Asp2618, and Val2619. The For 2'-O-MTase activity role is filled by Asp2633. Ile2634 serves as a coordination point for S-adenosyl-L-methionine. Residues Lys2668 and Glu2704 each act as for 2'-O-MTase activity in the active site. Tyr2706 serves as a coordination point for S-adenosyl-L-methionine. Residues Glu2925, His2929, Cys2934, and Cys2937 each coordinate Zn(2+). Positions 3016–3166 (LIYADDTAGW…PLDERFSTSL (151 aa)) constitute a RdRp catalytic domain. 3 residues coordinate Zn(2+): His3200, Cys3216, and Cys3335.

It in the N-terminal section; belongs to the class I-like SAM-binding methyltransferase superfamily. mRNA cap 0-1 NS5-type methyltransferase family. As to quaternary structure, homodimer. Interacts (via N-terminus) with host EXOC1 (via C-terminus); this interaction results in EXOC1 degradation through the proteasome degradation pathway. Forms heterodimers with envelope protein E in the endoplasmic reticulum and Golgi. In terms of assembly, homodimer; in the endoplasmic reticulum and Golgi. Interacts with protein prM. Interacts with non-structural protein 1. As to quaternary structure, homodimer; Homohexamer when secreted. Interacts with envelope protein E. Interacts (via N-terminus) with serine protease NS3. In terms of assembly, forms a heterodimer with serine protease NS3. May form homooligomers. As to quaternary structure, forms a heterodimer with NS2B. Interacts with NS4B. Interacts with unphosphorylated RNA-directed RNA polymerase NS5; this interaction stimulates RNA-directed RNA polymerase NS5 guanylyltransferase activity. Interacts with host MAVS; this interaction inhibits the synthesis of IFN-beta. Interacts with host AUP1; the interaction occurs in the presence of Dengue virus NS4B and induces lipophagy which facilitates production of virus progeny particles. In terms of assembly, interacts with serine protease NS3. As to quaternary structure, homodimer. Interacts with host STAT2; this interaction inhibits the phosphorylation of the latter, and, when all viral proteins are present (polyprotein), targets STAT2 for degradation. Interacts with serine protease NS3. Interacts with host PAF1 complex; the interaction may prevent the recruitment of the PAF1 complex to interferon-responsive genes, and thus reduces the immune response. In terms of processing, specific enzymatic cleavages in vivo yield mature proteins. Cleavages in the lumen of endoplasmic reticulum are performed by host signal peptidase, whereas cleavages in the cytoplasmic side are performed by serine protease NS3. Signal cleavage at the 2K-4B site requires a prior NS3 protease-mediated cleavage at the 4A-2K site. Post-translationally, cleaved in post-Golgi vesicles by a host furin, releasing the mature small envelope protein M, and peptide pr. This cleavage is incomplete as up to 30% of viral particles still carry uncleaved prM. N-glycosylated. In terms of processing, N-glycosylated. The excreted form is glycosylated and this is required for efficient secretion of the protein from infected cells. Post-translationally, acetylated by host KAT5. Acetylation modulates NS3 RNA-binding and unwinding activities and plays an important positive role for viral replication. Sumoylation of RNA-directed RNA polymerase NS5 increases NS5 protein stability allowing proper viral RNA replication. In terms of processing, phosphorylated on serines residues. This phosphorylation may trigger NS5 nuclear localization.

The protein localises to the virion. It is found in the host nucleus. The protein resides in the host cytoplasm. Its subcellular location is the host perinuclear region. It localises to the secreted. The protein localises to the virion membrane. It is found in the host endoplasmic reticulum membrane. The protein resides in the host mitochondrion. The enzyme catalyses Selective hydrolysis of -Xaa-Xaa-|-Yaa- bonds in which each of the Xaa can be either Arg or Lys and Yaa can be either Ser or Ala.. It catalyses the reaction RNA(n) + a ribonucleoside 5'-triphosphate = RNA(n+1) + diphosphate. The catalysed reaction is a ribonucleoside 5'-triphosphate + H2O = a ribonucleoside 5'-diphosphate + phosphate + H(+). It carries out the reaction ATP + H2O = ADP + phosphate + H(+). The enzyme catalyses a 5'-end (5'-triphosphoguanosine)-ribonucleoside in mRNA + S-adenosyl-L-methionine = a 5'-end (N(7)-methyl 5'-triphosphoguanosine)-ribonucleoside in mRNA + S-adenosyl-L-homocysteine. It catalyses the reaction a 5'-end (N(7)-methyl 5'-triphosphoguanosine)-ribonucleoside in mRNA + S-adenosyl-L-methionine = a 5'-end (N(7)-methyl 5'-triphosphoguanosine)-(2'-O-methyl-ribonucleoside) in mRNA + S-adenosyl-L-homocysteine + H(+). Plays a role in virus budding by binding to the cell membrane and gathering the viral RNA into a nucleocapsid that forms the core of a mature virus particle. During virus entry, may induce genome penetration into the host cytoplasm after hemifusion induced by the surface proteins. Can migrate to the cell nucleus where it modulates host functions. Overcomes the anti-viral effects of host EXOC1 by sequestering and degrading the latter through the proteasome degradation pathway. Functionally, inhibits RNA silencing by interfering with host Dicer. Its function is as follows. Prevents premature fusion activity of envelope proteins in trans-Golgi by binding to envelope protein E at pH6.0. After virion release in extracellular space, gets dissociated from E dimers. In terms of biological role, acts as a chaperone for envelope protein E during intracellular virion assembly by masking and inactivating envelope protein E fusion peptide. prM is the only viral peptide matured by host furin in the trans-Golgi network probably to avoid catastrophic activation of the viral fusion activity in acidic Golgi compartment prior to virion release. prM-E cleavage is inefficient, and many virions are only partially matured. These uncleaved prM would play a role in immune evasion. May play a role in virus budding. Exerts cytotoxic effects by activating a mitochondrial apoptotic pathway through M ectodomain. May display a viroporin activity. Functionally, binds to host cell surface receptor and mediates fusion between viral and cellular membranes. Envelope protein is synthesized in the endoplasmic reticulum in the form of heterodimer with protein prM. They play a role in virion budding in the ER, and the newly formed immature particle is covered with 60 spikes composed of heterodimer between precursor prM and envelope protein E. The virion is transported to the Golgi apparatus where the low pH causes dissociation of PrM-E heterodimers and formation of E homodimers. prM-E cleavage is inefficient, and many virions are only partially matured. These uncleaved prM would play a role in immune evasion. Its function is as follows. Involved in immune evasion, pathogenesis and viral replication. Once cleaved off the polyprotein, is targeted to three destinations: the viral replication cycle, the plasma membrane and the extracellular compartment. Essential for viral replication. Required for formation of the replication complex and recruitment of other non-structural proteins to the ER-derived membrane structures. Excreted as a hexameric lipoparticle that plays a role against host immune response. Antagonizing the complement function. Binds to the host macrophages and dendritic cells. Inhibits signal transduction originating from Toll-like receptor 3 (TLR3). In terms of biological role, disrupts the host endothelial glycocalyx layer of host pulmonary microvascular endothelial cells, inducing degradation of sialic acid and shedding of heparan sulfate proteoglycans. NS1 induces expression of sialidases, heparanase, and activates cathepsin L, which activates heparanase via enzymatic cleavage. These effects are probably linked to the endothelial hyperpermeability observed in severe dengue disease. Component of the viral RNA replication complex that functions in virion assembly and antagonizes the host immune response. Functionally, required cofactor for the serine protease function of NS3. May have membrane-destabilizing activity and form viroporins. Its function is as follows. Displays three enzymatic activities: serine protease, NTPase and RNA helicase. NS3 serine protease, in association with NS2B, performs its autocleavage and cleaves the polyprotein at dibasic sites in the cytoplasm: C-prM, NS2A-NS2B, NS2B-NS3, NS3-NS4A, NS4A-2K and NS4B-NS5. NS3 RNA helicase binds RNA and unwinds dsRNA in the 3' to 5' direction. In terms of biological role, regulates the ATPase activity of the NS3 helicase activity. NS4A allows NS3 helicase to conserve energy during unwinding. Plays a role in the inhibition of the host innate immune response. Interacts with host MAVS and thereby prevents the interaction between RIGI and MAVS. In turn, IFN-beta production is impaired. Interacts with host AUP1 which mediates induction of lipophagy in host cells and facilitates production of virus progeny particles. Functions as a signal peptide for NS4B and is required for the interferon antagonism activity of the latter. Functionally, induces the formation of ER-derived membrane vesicles where the viral replication takes place. Inhibits interferon (IFN)-induced host STAT1 phosphorylation and nuclear translocation, thereby preventing the establishment of cellular antiviral state by blocking the IFN-alpha/beta pathway. Its function is as follows. Replicates the viral (+) and (-) RNA genome, and performs the capping of genomes in the cytoplasm. NS5 methylates viral RNA cap at guanine N-7 and ribose 2'-O positions. Besides its role in RNA genome replication, also prevents the establishment of cellular antiviral state by blocking the interferon-alpha/beta (IFN-alpha/beta) signaling pathway. Inhibits host TYK2 and STAT2 phosphorylation, thereby preventing activation of JAK-STAT signaling pathway. May reduce immune responses by preventing the recruitment of the host PAF1 complex to interferon-responsive genes. This is Genome polyprotein from Aedes aegypti (Yellowfever mosquito).